The primary structure comprises 146 residues: uncharacterized protein (146 aa).

One can recognise a Glutaredoxin domain in the interval 34–135 (EDKIVNDVMT…PLLEKAHALF (102 aa)). Cys-54 contributes to the [2Fe-2S] cluster binding site.

This sequence belongs to the glutaredoxin family. Monothiol subfamily.

This is an uncharacterized protein from Caenorhabditis elegans.